The primary structure comprises 340 residues: GATA transcription factor 20 (340 aa).

The interval 1–88 (MSHHDGSKPY…MEEDEDAQHH (88 aa)) is disordered. The span at 25–47 (ADDAAAHVAPTVDHLAAVAAEAE) shows a compositional bias: low complexity. Residues 48-60 (AMARFEEEHRALG) show a composition bias toward basic and acidic residues. Over residues 61-84 (AEEEYEEEEDELEEEEEEMEEDED) the composition is skewed to acidic residues. The Tify domain occupies 121–156 (QPMASNQLTLSFQGEVYVFDSVSPDKVQAVLLLLGG). One can recognise a CCT domain in the interval 182–224 (RVASLMRFREKRKERNFDKKIRYSVRKEVALRMQRNRGQFTSS). Residues 215-253 (QRNRGQFTSSKPKGDEATSELTASDGSPNWGSVEGRPPS) are disordered. The segment covering 233–244 (SELTASDGSPNW) has biased composition (polar residues). A GATA-type zinc finger spans residues 257 to 284 (CHHCGINAKATPMMRRGPDGPRTLCNAC). Positions 313–325 (DGNGSAAAPTTEQ) are enriched in polar residues. Residues 313–340 (DGNGSAAAPTTEQEIPAPATVNGHESST) form a disordered region.

The protein belongs to the type IV zinc-finger family. Class C subfamily.

Its subcellular location is the nucleus. Transcriptional activator that specifically binds 5'-GATA-3' or 5'-GAT-3' motifs within gene promoters. This Oryza sativa subsp. japonica (Rice) protein is GATA transcription factor 20.